The sequence spans 313 residues: Ribosomal protein L11 methyltransferase (313 aa).

4 residues coordinate S-adenosyl-L-methionine: threonine 164, glycine 185, aspartate 207, and asparagine 249.

This sequence belongs to the methyltransferase superfamily. PrmA family.

It is found in the cytoplasm. It carries out the reaction L-lysyl-[protein] + 3 S-adenosyl-L-methionine = N(6),N(6),N(6)-trimethyl-L-lysyl-[protein] + 3 S-adenosyl-L-homocysteine + 3 H(+). Its function is as follows. Methylates ribosomal protein L11. The protein is Ribosomal protein L11 methyltransferase of Clostridium botulinum (strain Alaska E43 / Type E3).